A 750-amino-acid polypeptide reads, in one-letter code: uncharacterized protein (750 aa).

This is an uncharacterized protein from Escherichia coli O157:H7.